We begin with the raw amino-acid sequence, 737 residues long: O-GlcNAcase BT_4395 (737 aa).

Residues 1–21 form the signal peptide; that stretch reads MKNNKIYLLGACLLCAVTTFA. The tract at residues 148-433 is catalytic domain; sequence VRYRGVVEGF…WKDAIRTILP (286 aa). A GH84 domain is found at 149 to 416; it reads RYRGVVEGFY…SVASYAWNPA (268 aa). Gly156, Lys187, and Asp263 together coordinate a protein. Asp264 acts as the Proton donor in catalysis. A protein-binding positions include Tyr303, 358-360, Asp365, and Asn393; that span reads WWN.

It belongs to the glycosyl hydrolase 84 family. As to quaternary structure, homodimer.

The catalysed reaction is 3-O-(N-acetyl-beta-D-glucosaminyl)-L-seryl-[protein] + H2O = N-acetyl-D-glucosamine + L-seryl-[protein]. It carries out the reaction 3-O-(N-acetyl-beta-D-glucosaminyl)-L-threonyl-[protein] + H2O = L-threonyl-[protein] + N-acetyl-D-glucosamine. Its activity is regulated as follows. Inhibited by 1,2-dideoxy-2'-methyl-alpha-D-glucopyranoso-[2,1-d]-delta 2'-thiazoline (NAG-thiazoline) and O-(2-acetamido-2-deoxy-D-glucopyranosylidene)amino-N-phenyl-carbamate (PUGNAc). Not inhibited by Streptozotocin. Can hydrolyze the glycosidic link of O-GlcNAcylated proteins. Can use p-nitrophenyl-beta-GlcNAc and 4-methylumbelliferone-GlcNAc as substrates (in vitro). This is O-GlcNAcase BT_4395 from Bacteroides thetaiotaomicron (strain ATCC 29148 / DSM 2079 / JCM 5827 / CCUG 10774 / NCTC 10582 / VPI-5482 / E50).